A 1871-amino-acid chain; its full sequence is Protein RRP5 homolog (1871 aa).

The interval 1–62 (MANLEESFPR…KTKKLKIEKR (62 aa)) is disordered. N-acetylalanine is present on alanine 2. Serine 7 bears the Phosphoserine mark. A compositionally biased stretch (basic residues) spans 43 to 59 (KRKKSQKGPAKTKKLKI). S1 motif domains lie at 83–171 (GMRI…LSLN), 187–258 (GMLL…LSVG), 281–346 (GLVV…LSLR), and 365–436 (GAVL…LSLR). Serine 438 is subject to Phosphoserine. 4 S1 motif domains span residues 453–522 (GAVV…MTLK), 542–611 (GLQT…LSFK), 636–707 (GQLV…LCRK), and 729–798 (GMLL…LSLR). The segment at 998–1018 (AAKRTMRPTQKDSETVDEDEE) is disordered. Lysine 1030 is covalently cross-linked (Glycyl lysine isopeptide (Lys-Gly) (interchain with G-Cter in SUMO1)). S1 motif domains lie at 1036 to 1109 (GDMV…ISHP), 1149 to 1222 (GQTV…LSLT), 1230 to 1298 (GEVA…LSLR), and 1324 to 1396 (GQLL…LSFL). Residues serine 1360 and serine 1362 each carry the phosphoserine modification. 2 disordered regions span residues 1395–1531 (FLPG…APRL) and 1549–1586 (ALPPLAESSDSEEDEKPHQATIKKSKKERELEKQKAEK). Lysine 1416 is covalently cross-linked (Glycyl lysine isopeptide (Lys-Gly) (interchain with G-Cter in SUMO2)). 2 stretches are compositionally biased toward basic and acidic residues: residues 1416 to 1459 (KQEE…EKQQ) and 1469 to 1484 (GGRECRESGSEQERVS). Phosphoserine occurs at positions 1476, 1493, and 1498. Positions 1575–1586 (KERELEKQKAEK) are enriched in basic and acidic residues. 4 HAT repeats span residues 1599-1631 (GRQPESADDFDRLVLSSPNSSILWLQYMAFHLQ), 1705-1737 (EKFQEAGELYNRMLKRFRQEKAVWIKYGAFLLR), 1775-1807 (GDAERAKAIFENTLSTYPKRTDVWSVYIDMTIK), and 1809-1844 (GSQKDVRDIFERVIHLSLAPKRMKFFFKRYLDYEKQ).

Interacts with NF-kappa-B p50/NFKB1 and NF-kappa-B p65/RELA.

The protein localises to the nucleus. The protein resides in the nucleolus. Its function is as follows. Essential for the generation of mature 18S rRNA, specifically necessary for cleavages at sites A0, 1 and 2 of the 47S precursor. Directly interacts with U3 snoRNA. Functionally, involved in the biogenesis of rRNA. The protein is Protein RRP5 homolog (PDCD11) of Homo sapiens (Human).